The chain runs to 310 residues: Glutaminase (310 aa).

Substrate-binding residues include S67, N118, E161, N168, Y192, Y244, and V262.

Belongs to the glutaminase family. As to quaternary structure, homotetramer.

It carries out the reaction L-glutamine + H2O = L-glutamate + NH4(+). This Legionella pneumophila subsp. pneumophila (strain Philadelphia 1 / ATCC 33152 / DSM 7513) protein is Glutaminase.